The following is a 148-amino-acid chain: Putative lysozyme C-2 (148 aa).

The first 18 residues, 1–18 (MKALLVLGFLLLSASVQA), serve as a signal peptide directing secretion. One can recognise a C-type lysozyme domain in the interval 19-148 (KVFKHCELAR…LSGYIRNCGV (130 aa)). 4 cysteine pairs are disulfide-bonded: Cys-24-Cys-146, Cys-48-Cys-134, Cys-83-Cys-99, and Cys-95-Cys-113. Catalysis depends on residues Glu-53 and Asp-71.

It belongs to the glycosyl hydrolase 22 family. Monomer.

The protein resides in the secreted. It carries out the reaction Hydrolysis of (1-&gt;4)-beta-linkages between N-acetylmuramic acid and N-acetyl-D-glucosamine residues in a peptidoglycan and between N-acetyl-D-glucosamine residues in chitodextrins.. Functionally, lysozymes have primarily a bacteriolytic function; those in tissues and body fluids are associated with the monocyte-macrophage system and enhance the activity of immunoagents. In the intestine they may also have a digestive function. The protein is Putative lysozyme C-2 (Lyz2) of Rattus norvegicus (Rat).